A 376-amino-acid chain; its full sequence is Biotin synthase (376 aa).

A Radical SAM core domain is found at 68 to 292 (NEVQISTLLS…IAVTRICCPS (225 aa)). Residues cysteine 83, cysteine 87, and cysteine 90 each contribute to the [4Fe-4S] cluster site. Residues cysteine 129, cysteine 160, cysteine 220, and arginine 296 each contribute to the [2Fe-2S] cluster site.

This sequence belongs to the radical SAM superfamily. Biotin synthase family. As to quaternary structure, homodimer. It depends on [4Fe-4S] cluster as a cofactor. Requires [2Fe-2S] cluster as cofactor.

The enzyme catalyses (4R,5S)-dethiobiotin + (sulfur carrier)-SH + 2 reduced [2Fe-2S]-[ferredoxin] + 2 S-adenosyl-L-methionine = (sulfur carrier)-H + biotin + 2 5'-deoxyadenosine + 2 L-methionine + 2 oxidized [2Fe-2S]-[ferredoxin]. It participates in cofactor biosynthesis; biotin biosynthesis; biotin from 7,8-diaminononanoate: step 2/2. Functionally, catalyzes the conversion of dethiobiotin (DTB) to biotin by the insertion of a sulfur atom into dethiobiotin via a radical-based mechanism. This chain is Biotin synthase, found in Psychrobacter cryohalolentis (strain ATCC BAA-1226 / DSM 17306 / VKM B-2378 / K5).